The following is a 363-amino-acid chain: Large ribosomal subunit protein uL4 (363 aa).

It belongs to the universal ribosomal protein uL4 family. In terms of assembly, component of the large ribosomal subunit. Mature ribosomes consist of a small (40S) and a large (60S) subunit. The 40S subunit contains about 32 different proteins and 1 molecule of RNA (18S). The 60S subunit contains 45 different proteins and 3 molecules of RNA (25S, 5.8S and 5S).

Its subcellular location is the cytoplasm. Component of the ribosome, a large ribonucleoprotein complex responsible for the synthesis of proteins in the cell. The small ribosomal subunit (SSU) binds messenger RNAs (mRNAs) and translates the encoded message by selecting cognate aminoacyl-transfer RNA (tRNA) molecules. The large subunit (LSU) contains the ribosomal catalytic site termed the peptidyl transferase center (PTC), which catalyzes the formation of peptide bonds, thereby polymerizing the amino acids delivered by tRNAs into a polypeptide chain. The nascent polypeptides leave the ribosome through a tunnel in the LSU and interact with protein factors that function in enzymatic processing, targeting, and the membrane insertion of nascent chains at the exit of the ribosomal tunnel. In Candida albicans (strain SC5314 / ATCC MYA-2876) (Yeast), this protein is Large ribosomal subunit protein uL4.